The chain runs to 189 residues: Elongation factor P (189 aa).

This sequence belongs to the elongation factor P family.

The protein resides in the cytoplasm. It participates in protein biosynthesis; polypeptide chain elongation. Its function is as follows. Involved in peptide bond synthesis. Stimulates efficient translation and peptide-bond synthesis on native or reconstituted 70S ribosomes in vitro. Probably functions indirectly by altering the affinity of the ribosome for aminoacyl-tRNA, thus increasing their reactivity as acceptors for peptidyl transferase. The protein is Elongation factor P of Campylobacter jejuni subsp. doylei (strain ATCC BAA-1458 / RM4099 / 269.97).